The following is a 384-amino-acid chain: Putative spore germination protein YfkR (384 aa).

A signal peptide spans 1–20; the sequence is MKKTIYKCVLPLLICILLTG. The N-palmitoyl cysteine moiety is linked to residue C21. C21 carries the S-diacylglycerol cysteine lipid modification.

The protein belongs to the GerABKC lipoprotein family.

The protein localises to the cell membrane. In terms of biological role, may be involved in spore germination. The protein is Putative spore germination protein YfkR (yfkR) of Bacillus subtilis (strain 168).